Reading from the N-terminus, the 162-residue chain is Caveolin-2 (162 aa).

Residues 1-86 (MGLETEKADV…FEMSKYVIYK (86 aa)) are Cytoplasmic-facing. Residue tyrosine 19 is modified to Phosphotyrosine; by SRC. 2 positions are modified to phosphoserine: serine 20 and serine 23. A Phosphotyrosine; by SRC modification is found at tyrosine 27. Positions 87–107 (FLTVFLAIPLAFAAGILFATL) form an intramembrane region, helical. The Cytoplasmic portion of the chain corresponds to 108 to 162 (SCLHIWIIMPFVKTCLMVLPSVQTIWKSVTDVVIAPLCTSIGRSFSSVSLQLSHD).

It belongs to the caveolin family. In terms of assembly, monomer or homodimer. Interacts with CAV1; the interaction forms a stable heterooligomeric complex that is required for targeting to lipid rafts and for caveolae formation. Tyrosine phosphorylated forms do not form heterooligomers with the Tyr-19-phosphorylated form existing as a monomer or dimer, and the Tyr-27-form as a monomer only. Interacts (tyrosine phosphorylated form) with the SH2 domain-containing proteins, RASA1, NCK1 and SRC. Interacts (tyrosine phosphorylated form) with INSR, the interaction (Tyr-27-phosphorylated form) is increased on insulin stimulation. Interacts (Tyr-19 phosphorylated form) with MAPK1 (phosphorylated form); the interaction, promoted by insulin, leads to nuclear location and MAPK1 activation. Interacts with STAT3; the interaction is increased on insulin-induced tyrosine phosphorylation leading to STAT activation. Phosphorylated on serine and tyrosine residues. CAV1 promotes phosphorylation on Ser-23 which then targets the complex to the plasma membrane, lipid rafts and caveolae. Phosphorylation on both Tyr-19 and Tyr-27 is required for insulin-induced 'Ser-727' phosphorylation of STAT3 and its activation. Phosphorylation on Tyr-19 is required for insulin-induced phosphorylation of MAPK1 and DNA binding of STAT3. Tyrosine phosphorylation is induced by both EGF and insulin. Expressed in aortic endothelial cells.

The protein localises to the nucleus. The protein resides in the cytoplasm. Its subcellular location is the golgi apparatus membrane. It localises to the cell membrane. It is found in the membrane. The protein localises to the caveola. In terms of biological role, may act as a scaffolding protein within caveolar membranes. Interacts directly with G-protein alpha subunits and can functionally regulate their activity. Acts as an accessory protein in conjunction with CAV1 in targeting to lipid rafts and driving caveolae formation. Positive regulator of cellular mitogenesis of the MAPK signaling pathway. Required for the insulin-stimulated nuclear translocation and activation of MAPK1 and STAT3, and the subsequent regulation of cell cycle progression. The chain is Caveolin-2 (CAV2) from Bos taurus (Bovine).